A 155-amino-acid polypeptide reads, in one-letter code: Deoxyuridine 5'-triphosphate nucleotidohydrolase (155 aa).

Residues 72-74, Asn85, 89-91, and Lys99 each bind substrate; these read RSG and TVD.

Belongs to the dUTPase family. Mg(2+) serves as cofactor.

The catalysed reaction is dUTP + H2O = dUMP + diphosphate + H(+). Its pathway is pyrimidine metabolism; dUMP biosynthesis; dUMP from dCTP (dUTP route): step 2/2. This enzyme is involved in nucleotide metabolism: it produces dUMP, the immediate precursor of thymidine nucleotides and it decreases the intracellular concentration of dUTP so that uracil cannot be incorporated into DNA. The protein is Deoxyuridine 5'-triphosphate nucleotidohydrolase of Parvibaculum lavamentivorans (strain DS-1 / DSM 13023 / NCIMB 13966).